Here is a 144-residue protein sequence, read N- to C-terminus: Superoxide dismutase [Mn], mitochondrial (144 aa).

Residues His10, His58, and Asp143 each contribute to the Mn(2+) site.

This sequence belongs to the iron/manganese superoxide dismutase family. In terms of assembly, homotetramer. The cofactor is Mn(2+).

It localises to the mitochondrion matrix. It catalyses the reaction 2 superoxide + 2 H(+) = H2O2 + O2. In terms of biological role, destroys superoxide anion radicals which are normally produced within the cells and which are toxic to biological systems. The polypeptide is Superoxide dismutase [Mn], mitochondrial (Palinurus vulgaris (European spiny lobster)).